Consider the following 388-residue polypeptide: uncharacterized protein (388 aa).

This is an uncharacterized protein from Klebsiella pneumoniae.